Reading from the N-terminus, the 750-residue chain is MIIRSPEPEVKILVDRDPIKTSFEEWAKPGHFSRTIAKGPDTTTWIWNLHADAHDFDSHTSDLEEISRKVFSAHFGQLSIIFLWLSGMYFHGARFSNYEAWLSDPTHIGPSAQVVWPIVGQEILNGDVGGGFRGIQITSGFFQIWRASGITSELQLYCTAIGALVFAALMLFAGWFHYHKAAPKLAWFQDVESMLNHHLAGLLGLGSLSWAGHQVHVSLPINQFLNAGVDPKEIPLPHEFILNRDLLAQLYPSFAEGATPFFTLNWSKYSEFLTFRGGLDPVTGGLWLTDIAHHHLAIAILFLIAGHMYRTNWGIGHGLKDILEAHKGPFTGQGHKGLYEILTTSWHAQLSLNLAMLGSLTIVVAHHMYAMPPYPYLATDYATQLSLFTHHMWIGGFLIVGAAAHAAIFMVRDYDPTNRYNDLLDRVLRHRDAIISHLNWVCIFLGFHSFGLYIHNDTMSALGRPQDMFSDTAIQLQPVFAQWIQNTHALAPGVTAPGETASTSLTWGGGELVAVGGKVALLPIPLGTADFLVHHIHAFTIHVTVLILLKGVLFARSSRLIPDKANLGFRFPCDGPGRGGTCQVSAWDHVFLGLFWMYNAISVVIFHFSWKMQSDVWGSISDQGVVTHITGGNFAQSSITINGWLRDFLWAQASQVIQSYGSSLSAYGLFFLGAHFVWAFSLMFLFSGRGYWQELIESIVWAHNKLKVAPATQPRALSIVQGRAVGVTHYLLGGIATTWAFFLARIIAVG.

Transmembrane regions (helical) follow at residues 70–93 (VFSAHFGQLSIIFLWLSGMYFHGA), 156–179 (LYCTAIGALVFAALMLFAGWFHYH), 195–219 (LNHHLAGLLGLGSLSWAGHQVHVSL), 291–309 (IAHHHLAIAILFLIAGHMY), 346–369 (WHAQLSLNLAMLGSLTIVVAHHMY), 385–411 (LSLFTHHMWIGGFLIVGAAAHAAIFMV), 433–455 (AIISHLNWVCIFLGFHSFGLYIH), and 531–549 (FLVHHIHAFTIHVTVLILL). 2 residues coordinate [4Fe-4S] cluster: Cys-573 and Cys-582. 2 helical membrane-spanning segments follow: residues 589–610 (HVFLGLFWMYNAISVVIFHFSW) and 664–686 (LSAYGLFFLGAHFVWAFSLMFLF). Residue His-675 participates in chlorophyll a' binding. The chlorophyll a site is built by Met-683 and Tyr-691. A phylloquinone-binding site is contributed by Trp-692. Residues 724-744 (AVGVTHYLLGGIATTWAFFLA) form a helical membrane-spanning segment.

It belongs to the PsaA/PsaB family. As to quaternary structure, the PsaA/B heterodimer binds the P700 chlorophyll special pair and subsequent electron acceptors. PSI consists of a core antenna complex that captures photons, and an electron transfer chain that converts photonic excitation into a charge separation. The eukaryotic PSI reaction center is composed of at least 11 subunits. P700 is a chlorophyll a/chlorophyll a' dimer, A0 is one or more chlorophyll a, A1 is one or both phylloquinones and FX is a shared 4Fe-4S iron-sulfur center. serves as cofactor.

The protein localises to the plastid. The protein resides in the chloroplast thylakoid membrane. The enzyme catalyses reduced [plastocyanin] + hnu + oxidized [2Fe-2S]-[ferredoxin] = oxidized [plastocyanin] + reduced [2Fe-2S]-[ferredoxin]. In terms of biological role, psaA and PsaB bind P700, the primary electron donor of photosystem I (PSI), as well as the electron acceptors A0, A1 and FX. PSI is a plastocyanin-ferredoxin oxidoreductase, converting photonic excitation into a charge separation, which transfers an electron from the donor P700 chlorophyll pair to the spectroscopically characterized acceptors A0, A1, FX, FA and FB in turn. Oxidized P700 is reduced on the lumenal side of the thylakoid membrane by plastocyanin. The chain is Photosystem I P700 chlorophyll a apoprotein A1 from Draba nemorosa (Woodland whitlowgrass).